Here is a 1829-residue protein sequence, read N- to C-terminus: Unconventional myosin-Va (1829 aa).

The Myosin N-terminal SH3-like domain maps to 8–60 (TKYARVWIPDPEEVWKSAELLKDYKPGDKVLQLRLEEGKDLEYCLDPKTKELP). Residues 69–764 (VGENDLTALS…QVAYLEKIRA (696 aa)) enclose the Myosin motor domain. 163–170 (GESGAGKT) lines the ATP pocket. The disordered stretch occupies residues 599-635 (AISPTSATPSGRVPLSRTPVKPAKARPGQTSKEHKKT). An actin-binding region spans residues 644-666 (LHLLMETLNATTPHYVRCIKPND). IQ domains follow at residues 767–789 (LRAACIRIQKTIRGWLMRKKYMR), 790–814 (MRRAAITIQRYVRGHQARCYATFLR), 815–837 (RTRAAIIIQKFQRMYVVRKRYQC), 838–862 (MRDATIALQALLRGYLVRNKYQMML), 863–887 (REHKSIIIQKHVRGWLARVHYHRTL), and 888–915 (KAIVYLQCCYRRMMAKRELKKLKIEARS). Coiled-coil stretches lie at residues 916–1239 (VERY…PEVT) and 1315–1419 (GLKE…ELEV). 2 disordered regions span residues 1106 to 1148 (IPKP…SEKK) and 1170 to 1199 (KQSLQDELDRKEEQALRAKAKEEERPPIRG). A compositionally biased stretch (polar residues) spans 1117–1131 (THSSNESEYTFSSEI). Composition is skewed to basic and acidic residues over residues 1137–1148 (LPLRMEEPSEKK) and 1170–1196 (KQSLQDELDRKEEQALRAKAKEEERPP). Residues 1508 to 1784 (TSTINGIKKV…IRTIQLRLRD (277 aa)) form the Dilute domain. Residue T1734 is modified to Phosphothreonine.

This sequence belongs to the TRAFAC class myosin-kinesin ATPase superfamily. Myosin family. In terms of assembly, may be a homodimer, which associates with multiple calmodulin or myosin light chains. In terms of tissue distribution, neuronal and non-neuronal cells of the brain.

The protein localises to the golgi apparatus membrane. The enzyme catalyses ATP + H2O = ADP + phosphate + H(+). In terms of biological role, processive actin-based motor that can move in large steps approximating the 36-nm pseudo-repeat of the actin filament. Can hydrolyze ATP in the presence of actin, which is essential for its function as a motor protein. Involved in melanosome transport. Also mediates the transport of vesicles to the plasma membrane. May also be required for some polarization process involved in dendrite formation. This is Unconventional myosin-Va (MYO5A) from Gallus gallus (Chicken).